The following is a 230-amino-acid chain: Flagellar L-ring protein (230 aa).

The first 16 residues, 1–16 (MYLVFGIIFTSVIVTS), serve as a signal peptide directing secretion. Cysteine 17 is lipidated: N-palmitoyl cysteine. The S-diacylglycerol cysteine moiety is linked to residue cysteine 17.

The protein belongs to the FlgH family. In terms of assembly, the basal body constitutes a major portion of the flagellar organelle and consists of four rings (L,P,S, and M) mounted on a central rod.

It localises to the cell outer membrane. It is found in the bacterial flagellum basal body. Its function is as follows. Assembles around the rod to form the L-ring and probably protects the motor/basal body from shearing forces during rotation. This is Flagellar L-ring protein from Bartonella bacilliformis (strain ATCC 35685 / KC583 / Herrer 020/F12,63).